A 669-amino-acid polypeptide reads, in one-letter code: DNA ligase 2 (669 aa).

NAD(+) contacts are provided by residues 35 to 39 (DKEYD) and 83 to 84 (SL). Residue K125 is the N6-AMP-lysine intermediate of the active site. NAD(+) is bound by residues R147, E181, and K317. Zn(2+) is bound by residues C410, C413, C426, and C432. The region spanning 590–669 (VVENAFTGKT…EEFEQLINNM (80 aa)) is the BRCT domain.

The protein belongs to the NAD-dependent DNA ligase family. LigA subfamily. Mg(2+) is required as a cofactor. It depends on Mn(2+) as a cofactor.

The catalysed reaction is NAD(+) + (deoxyribonucleotide)n-3'-hydroxyl + 5'-phospho-(deoxyribonucleotide)m = (deoxyribonucleotide)n+m + AMP + beta-nicotinamide D-nucleotide.. Its function is as follows. DNA ligase that catalyzes the formation of phosphodiester linkages between 5'-phosphoryl and 3'-hydroxyl groups in double-stranded DNA using NAD as a coenzyme and as the energy source for the reaction. It is essential for DNA replication and repair of damaged DNA. This Clostridium acetobutylicum (strain ATCC 824 / DSM 792 / JCM 1419 / IAM 19013 / LMG 5710 / NBRC 13948 / NRRL B-527 / VKM B-1787 / 2291 / W) protein is DNA ligase 2.